Here is a 255-residue protein sequence, read N- to C-terminus: Acetylglutamate kinase (255 aa).

Residues 40–41 (GG), Arg62, and Asn153 each bind substrate.

It belongs to the acetylglutamate kinase family. ArgB subfamily.

It is found in the cytoplasm. The enzyme catalyses N-acetyl-L-glutamate + ATP = N-acetyl-L-glutamyl 5-phosphate + ADP. Its pathway is amino-acid biosynthesis; L-arginine biosynthesis; N(2)-acetyl-L-ornithine from L-glutamate: step 2/4. Functionally, catalyzes the ATP-dependent phosphorylation of N-acetyl-L-glutamate. This chain is Acetylglutamate kinase, found in Bacillus cereus (strain 03BB102).